Here is a 502-residue protein sequence, read N- to C-terminus: Probable glycine dehydrogenase (decarboxylating) subunit 2 (502 aa).

K273 is modified (N6-(pyridoxal phosphate)lysine).

It belongs to the GcvP family. C-terminal subunit subfamily. The glycine cleavage system is composed of four proteins: P, T, L and H. In this organism, the P 'protein' is a heterodimer of two subunits. Pyridoxal 5'-phosphate is required as a cofactor.

The enzyme catalyses N(6)-[(R)-lipoyl]-L-lysyl-[glycine-cleavage complex H protein] + glycine + H(+) = N(6)-[(R)-S(8)-aminomethyldihydrolipoyl]-L-lysyl-[glycine-cleavage complex H protein] + CO2. Its function is as follows. The glycine cleavage system catalyzes the degradation of glycine. The P protein binds the alpha-amino group of glycine through its pyridoxal phosphate cofactor; CO(2) is released and the remaining methylamine moiety is then transferred to the lipoamide cofactor of the H protein. This chain is Probable glycine dehydrogenase (decarboxylating) subunit 2, found in Pyrococcus abyssi (strain GE5 / Orsay).